Here is a 30-residue protein sequence, read N- to C-terminus: QRMCPKILMKCKQDSDCLLDCVCLKEGFCG.

3 disulfide bridges follow: Cys4–Cys21, Cys11–Cys23, and Cys17–Cys29.

This sequence belongs to the protease inhibitor I7 (squash-type serine protease inhibitor) family.

The protein localises to the secreted. Inhibits lysyl endopeptidase and trypsin. This Cucumis melo var. conomon (Oriental pickling melon) protein is Trypsin inhibitor 3.